Consider the following 298-residue polypeptide: Tyrosine recombinase XerC (298 aa).

The 85-residue stretch at 1–85 (MKPIAAFQEY…SLRSFYRYLT (85 aa)) folds into the Core-binding (CB) domain. The Tyr recombinase domain maps to 106–291 (HLPQFFYEAE…TMAHLKNEYM (186 aa)). Residues R146, K170, H243, R246, and H269 contribute to the active site. Y278 functions as the O-(3'-phospho-DNA)-tyrosine intermediate in the catalytic mechanism.

The protein belongs to the 'phage' integrase family. XerC subfamily. As to quaternary structure, forms a cyclic heterotetrameric complex composed of two molecules of XerC and two molecules of XerD.

It localises to the cytoplasm. Site-specific tyrosine recombinase, which acts by catalyzing the cutting and rejoining of the recombining DNA molecules. The XerC-XerD complex is essential to convert dimers of the bacterial chromosome into monomers to permit their segregation at cell division. It also contributes to the segregational stability of plasmids. This chain is Tyrosine recombinase XerC, found in Lacticaseibacillus paracasei (strain ATCC 334 / BCRC 17002 / CCUG 31169 / CIP 107868 / KCTC 3260 / NRRL B-441) (Lactobacillus paracasei).